Reading from the N-terminus, the 125-residue chain is Glutaredoxin-C1 (125 aa).

The Glutaredoxin domain maps to 19–119 (VNKAKEIVSA…PLLTEAGAIA (101 aa)). Cysteines 39 and 42 form a disulfide.

It belongs to the glutaredoxin family. CPYC subfamily.

It is found in the cytoplasm. Has a glutathione-disulfide oxidoreductase activity in the presence of NADPH and glutathione reductase. Reduces low molecular weight disulfides and proteins. The sequence is that of Glutaredoxin-C1 (GRXC1) from Arabidopsis thaliana (Mouse-ear cress).